The chain runs to 606 residues: Mitogen-activated protein kinase 20 (606 aa).

Positions 25-316 constitute a Protein kinase domain; the sequence is FKVQEVIGKG…AEEALADPYF (292 aa). ATP contacts are provided by residues 31–39 and K54; that span reads IGKGSYGVV. D151 functions as the Proton acceptor in the catalytic mechanism. T187 carries the post-translational modification Phosphothreonine. Residues 187-189 carry the TXY motif; it reads TDY. A Phosphotyrosine modification is found at Y189. Residue T192 is modified to Phosphothreonine.

The protein belongs to the protein kinase superfamily. CMGC Ser/Thr protein kinase family. MAP kinase subfamily. Dually phosphorylated on Thr-187 and Tyr-189, which activates the enzyme.

It carries out the reaction L-seryl-[protein] + ATP = O-phospho-L-seryl-[protein] + ADP + H(+). It catalyses the reaction L-threonyl-[protein] + ATP = O-phospho-L-threonyl-[protein] + ADP + H(+). Its activity is regulated as follows. Activated by threonine and tyrosine phosphorylation. The sequence is that of Mitogen-activated protein kinase 20 (MPK20) from Arabidopsis thaliana (Mouse-ear cress).